The following is a 564-amino-acid chain: uncharacterized protein (564 aa).

Transmembrane regions (helical) follow at residues 12 to 32, 97 to 119, 139 to 161, 188 to 208, 213 to 233, 277 to 297, 306 to 326, and 348 to 368; these read TYYL…LFIL, MTAY…YVLL, AFAL…LALW, FVLG…YDAI, WNLM…FVEY, MTVH…ALLF, NVYL…AFWF, and FHFL…YLIW.

The protein localises to the cell membrane. This is an uncharacterized protein from Bacillus subtilis (strain 168).